We begin with the raw amino-acid sequence, 292 residues long: Aquaporin-3 (292 aa).

At 1–24 (MGRQKELVSRCGEMLHIRYRLLRQ) the chain is on the cytoplasmic side. A helical transmembrane segment spans residues 25–42 (ALAECLGTLILVMFGCGS). The Extracellular portion of the chain corresponds to 43-56 (VAQVVLSRGTHGGF). A helical transmembrane segment spans residues 57–74 (LTINLAFGFAVTLGILIA). Topologically, residues 75–78 (GQVS) are cytoplasmic. Residues 79–92 (GAHLNPAVTFAMCF) constitute an intramembrane region (discontinuously helical). The NPA 1 signature appears at 83–85 (NPA). Residues 93–100 (LAREPWIK) are Cytoplasmic-facing. A helical transmembrane segment spans residues 101–121 (LPIYTLAQTLGAFLGAGIVFG). Residues 122 to 159 (LYYDAIWHFADNQLFVSGPNGTAGIFATYPSGHLDMIN) lie on the Extracellular side of the membrane. The N-linked (GlcNAc...) asparagine glycan is linked to N141. A helical transmembrane segment spans residues 160 to 177 (GFFDQFIGTASLIVCVLA). The Cytoplasmic segment spans residues 178 to 189 (IVDPYNNPVPRG). Residues 190 to 206 (LEAFTVGLVVLVIGTSM) traverse the membrane as a helical segment. The Extracellular segment spans residues 207–210 (GFNS). The segment at residues 211–224 (GYAVNPARDFGPRL) is an intramembrane region (discontinuously helical). The short motif at 215–217 (NPA) is the NPA 2 element. Topologically, residues 225–242 (FTALAGWGSAVFTTGQHW) are extracellular. A helical membrane pass occupies residues 243-264 (WWVPIVSPLLGSIAGVFVYQLM). The Cytoplasmic portion of the chain corresponds to 265–292 (IGCHLEQPPPSNEEENVKLAHVKHKEQI).

This sequence belongs to the MIP/aquaporin (TC 1.A.8) family. Homotetramer; each monomer provides an independent glycerol/water pore. Could also exist in other oligomeric states. As to expression, widely expressed in epithelial cells of kidney (collecting ducts) and airways, in keratinocytes, immature dendritic cells and erythrocytes. Isoform 2 is not detectable in erythrocytes at the protein level.

Its subcellular location is the cell membrane. It is found in the basolateral cell membrane. The catalysed reaction is glycerol(in) = glycerol(out). The enzyme catalyses H2O(in) = H2O(out). It catalyses the reaction H2O2(out) = H2O2(in). It carries out the reaction urea(in) = urea(out). With respect to regulation, glycerol transport is regulated by pH, with the porin being permeable to glycerol at pH 7.4 but not at pH 5.5. Water permeability, however, is not influenced by pH. Functionally, aquaglyceroporins form homotetrameric transmembrane channels, with each monomer independently mediating glycerol and water transport across the plasma membrane along their osmotic gradient. Could also be permeable to urea. Also participates in cell permeability to H2O2 and H2O2-mediated signaling. In skin, transports glycerol to the epidermis and stratum corneum, where it maintains hydration, elasticity, and supports lipid biosynthesis for barrier repair. In kidney, contributes to the reabsorption of water, helping the body maintain proper fluid balance. The polypeptide is Aquaporin-3 (Homo sapiens (Human)).